Here is a 215-residue protein sequence, read N- to C-terminus: Tricarboxylate transporter ALT9 (215 aa).

2 Solcar repeats span residues 18–106 (TTVV…LAPM) and 111–197 (CGVS…VVRL). 3 helical membrane passes run 19 to 39 (TVVG…VLVL), 112 to 132 (GVST…YCTM), and 182 to 202 (VAGA…GFLV).

It belongs to the mitochondrial carrier (TC 2.A.29) family.

The protein resides in the mitochondrion inner membrane. It participates in mycotoxin biosynthesis. Functionally, tricarboxylate transporter; part of the gene cluster that mediates the biosynthesis of the host-selective toxins (HSTs) AAL-toxins, sphinganine-analog mycotoxins responsible for Alternaria stem canker on tomato by the tomato pathotype. The biosynthesis starts with the polyketide synthase ALT1-catalyzed C-16 carbon chain assembly from one starter acetyl-CoA unit with malonyl-CoA extender units. ALT1 also selectively transfers methyl groups at the first and the third cycle of chain elongation for AAL toxin. The C-16 polyketide chain is released from the enzyme by a nucleophilic attack of a carbanion, which is derived from R-carbon of glycin by decarboxylation, on the carbonyl carbon of polyketide acyl chain. This step is probably catalyzed by a pyridoxal 5'-phosphate-dependent aminoacyl transferase ALT4. The respective functions of the other enzymes encoded by the cluster have still to be elucidated. The sphingosine N-acyltransferase-like protein ALT7 seems not to act as a resistance/self-tolerance factor against the toxin in the toxin biosynthetic gene cluster, contrary to what is expected. This Alternaria alternata (Alternaria rot fungus) protein is Tricarboxylate transporter ALT9.